The chain runs to 525 residues: Beta-1,4-xylosyltransferase IRX14 (525 aa).

Residues Met1–Leu35 are Cytoplasmic-facing. A helical; Signal-anchor for type II membrane protein transmembrane segment spans residues Ile36–Phe56. The Lumenal portion of the chain corresponds to Arg57 to Asn525. 3 N-linked (GlcNAc...) asparagine glycosylation sites follow: Asn102, Asn204, and Asn326. The interval Arg452–Asn525 is disordered. Residues Pro471 to Pro488 are compositionally biased toward polar residues. A compositionally biased stretch (basic residues) spans Thr489–His503. A compositionally biased stretch (polar residues) spans Thr508 to Ser519.

The protein belongs to the glycosyltransferase 43 family. As to expression, expressed in developing interfascicular fibers and xylem cells in stems and developing secondary xylem in roots.

The protein resides in the golgi apparatus membrane. The enzyme catalyses [(1-&gt;4)-beta-D-xylan](n) + UDP-alpha-D-xylose = [(1-&gt;4)-beta-D-xylan](n+1) + UDP + H(+). Involved in the synthesis of the hemicellulose glucuronoxylan, a major component of secondary cell walls. Involved in the elongation of glucuronoxylan xylosyl backbone. Xylan xylosyltransferase that acts cooperatively with IRX9 to achieve the successive addition of xylosyl residues during xylan backbone elongation. Required for the proper composition and structural properties of released seed coat mucilage. Required for the production of highly branched xylan polymers in seed coat mucilage. Xylan with xylose side chains seems to be necessary for pectin attachment to the seed surface. Together with MUCI70, required for xylan and pectin synthesis in seed coat epidermal (SCE) cells. This Arabidopsis thaliana (Mouse-ear cress) protein is Beta-1,4-xylosyltransferase IRX14.